A 261-amino-acid polypeptide reads, in one-letter code: Cytochrome c oxidase subunit 3 (261 aa).

The Mitochondrial matrix segment spans residues 1–15 (MAHQSHAYHMVKPSP). A helical membrane pass occupies residues 16–34 (WPLTGALSALLTTSGLTMW). At 35-40 (FHFHST) the chain is on the mitochondrial intermembrane side. Residues 41–66 (TLLLTGLLTNALTMYQWWRDVVREST) form a helical membrane-spanning segment. The Mitochondrial matrix portion of the chain corresponds to 67-72 (YQGHHT). Residues 73–105 (LPVQKGLRYGMILFITSEVFFFAGFFWAFYHSS) traverse the membrane as a helical segment. The Mitochondrial intermembrane portion of the chain corresponds to 106-128 (LAPTPQLGGHWPPTGIIPLNPLE). A helical membrane pass occupies residues 129 to 152 (VPLLNTSVLLASGVSITWAHHSLM). The Mitochondrial matrix portion of the chain corresponds to 153–155 (ENN). The chain crosses the membrane as a helical span at residues 156 to 183 (RTQMIQALLITILLGIYFTLLQASEYIE). The Mitochondrial intermembrane portion of the chain corresponds to 184–190 (APFTISD). Residues 191-223 (GIYGSTFFMATGFHGLHVIIGSTFLTVCLARQL) form a helical membrane-spanning segment. The Mitochondrial matrix portion of the chain corresponds to 224-232 (LFHFTSKHH). A helical transmembrane segment spans residues 233–256 (FGFEAAAWYWHFVDVVWLFLYVSI). At 257–261 (YWWGS) the chain is on the mitochondrial intermembrane side.

Belongs to the cytochrome c oxidase subunit 3 family. In terms of assembly, component of the cytochrome c oxidase (complex IV, CIV), a multisubunit enzyme composed of 14 subunits. The complex is composed of a catalytic core of 3 subunits MT-CO1, MT-CO2 and MT-CO3, encoded in the mitochondrial DNA, and 11 supernumerary subunits COX4I, COX5A, COX5B, COX6A, COX6B, COX6C, COX7A, COX7B, COX7C, COX8 and NDUFA4, which are encoded in the nuclear genome. The complex exists as a monomer or a dimer and forms supercomplexes (SCs) in the inner mitochondrial membrane with NADH-ubiquinone oxidoreductase (complex I, CI) and ubiquinol-cytochrome c oxidoreductase (cytochrome b-c1 complex, complex III, CIII), resulting in different assemblies (supercomplex SCI(1)III(2)IV(1) and megacomplex MCI(2)III(2)IV(2)).

The protein localises to the mitochondrion inner membrane. The catalysed reaction is 4 Fe(II)-[cytochrome c] + O2 + 8 H(+)(in) = 4 Fe(III)-[cytochrome c] + 2 H2O + 4 H(+)(out). Its function is as follows. Component of the cytochrome c oxidase, the last enzyme in the mitochondrial electron transport chain which drives oxidative phosphorylation. The respiratory chain contains 3 multisubunit complexes succinate dehydrogenase (complex II, CII), ubiquinol-cytochrome c oxidoreductase (cytochrome b-c1 complex, complex III, CIII) and cytochrome c oxidase (complex IV, CIV), that cooperate to transfer electrons derived from NADH and succinate to molecular oxygen, creating an electrochemical gradient over the inner membrane that drives transmembrane transport and the ATP synthase. Cytochrome c oxidase is the component of the respiratory chain that catalyzes the reduction of oxygen to water. Electrons originating from reduced cytochrome c in the intermembrane space (IMS) are transferred via the dinuclear copper A center (CU(A)) of subunit 2 and heme A of subunit 1 to the active site in subunit 1, a binuclear center (BNC) formed by heme A3 and copper B (CU(B)). The BNC reduces molecular oxygen to 2 water molecules using 4 electrons from cytochrome c in the IMS and 4 protons from the mitochondrial matrix. This is Cytochrome c oxidase subunit 3 (MT-CO3) from Pongo abelii (Sumatran orangutan).